We begin with the raw amino-acid sequence, 473 residues long: Bifunctional protein HldE (473 aa).

The interval 1 to 317 (MTHGLPHFTS…LQQALHPRAI (317 aa)) is ribokinase. Residue 195-198 (NLAE) participates in ATP binding. Residue D264 is part of the active site. The segment at 343–473 (MTNGCFDILH…SQIIDIIRKN (131 aa)) is cytidylyltransferase.

It in the N-terminal section; belongs to the carbohydrate kinase PfkB family. This sequence in the C-terminal section; belongs to the cytidylyltransferase family. In terms of assembly, homodimer.

The enzyme catalyses D-glycero-beta-D-manno-heptose 7-phosphate + ATP = D-glycero-beta-D-manno-heptose 1,7-bisphosphate + ADP + H(+). It catalyses the reaction D-glycero-beta-D-manno-heptose 1-phosphate + ATP + H(+) = ADP-D-glycero-beta-D-manno-heptose + diphosphate. The protein operates within nucleotide-sugar biosynthesis; ADP-L-glycero-beta-D-manno-heptose biosynthesis; ADP-L-glycero-beta-D-manno-heptose from D-glycero-beta-D-manno-heptose 7-phosphate: step 1/4. It functions in the pathway nucleotide-sugar biosynthesis; ADP-L-glycero-beta-D-manno-heptose biosynthesis; ADP-L-glycero-beta-D-manno-heptose from D-glycero-beta-D-manno-heptose 7-phosphate: step 3/4. Catalyzes the phosphorylation of D-glycero-D-manno-heptose 7-phosphate at the C-1 position to selectively form D-glycero-beta-D-manno-heptose-1,7-bisphosphate. Functionally, catalyzes the ADP transfer from ATP to D-glycero-beta-D-manno-heptose 1-phosphate, yielding ADP-D-glycero-beta-D-manno-heptose. The chain is Bifunctional protein HldE from Nitrosococcus oceani (strain ATCC 19707 / BCRC 17464 / JCM 30415 / NCIMB 11848 / C-107).